Here is an 858-residue protein sequence, read N- to C-terminus: Polyhomeotic-like protein 2 (858 aa).

Disordered regions lie at residues Met1–Gln76, Gln230–Arg307, Pro337–Gln388, Leu407–Pro444, Lys473–Gln493, and Thr529–Gln561. 2 stretches are compositionally biased toward low complexity: residues Thr10–Ser34 and Gln230–Thr241. Positions Ser33–Asp53 are interaction with BMI1. A compositionally biased stretch (polar residues) spans Pro265–Ala274. A compositionally biased stretch (low complexity) spans Pro337 to Gln358. Polar residues predominate over residues Ala379–Gln388. Over residues Lys473–Pro483 the composition is skewed to basic and acidic residues. Positions Thr537–Ala551 are enriched in low complexity. Positions Lys558–Val587 match the HD1 motif. Glycyl lysine isopeptide (Lys-Gly) (interchain with G-Cter in SUMO2) cross-links involve residues Lys598 and Lys600. The residue at position 619 (Thr619) is a Phosphothreonine. Position 621 is a phosphoserine (Ser621). A Glycyl lysine isopeptide (Lys-Gly) (interchain with G-Cter in SUMO2) cross-link involves residue Lys632. The segment at Glu633 to Lys667 adopts an FCS-type zinc-finger fold. Cys642, Cys645, Cys661, and Cys665 together coordinate Zn(2+). Disordered regions lie at residues Gln688–Val720 and His732–Asp768. Lys702 is covalently cross-linked (Glycyl lysine isopeptide (Lys-Gly) (interchain with G-Cter in SUMO2)). Ser751 is modified (phosphoserine). The region spanning Trp794 to Ser858 is the SAM domain. Lys847 participates in a covalent cross-link: Glycyl lysine isopeptide (Lys-Gly) (interchain with G-Cter in SUMO2).

As to quaternary structure, component of a PRC1-like complex. Interacts with CBX4. Interacts with BMI1, PCGF2, PHC1 and RNF2. Interacts with CHTOP. Interacts with the N-terminal region of the SP1 transcription factor and with MAPKAPK2. Interacts with SAMD7 and SAMD11.

It localises to the nucleus. Functionally, component of a Polycomb group (PcG) multiprotein PRC1-like complex, a complex class required to maintain the transcriptionally repressive state of many genes, including Hox genes, throughout development. PcG PRC1 complex acts via chromatin remodeling and modification of histones; it mediates monoubiquitination of histone H2A 'Lys-119', rendering chromatin heritably changed in its expressibility. The protein is Polyhomeotic-like protein 2 (PHC2) of Homo sapiens (Human).